A 187-amino-acid polypeptide reads, in one-letter code: Crossover junction endodeoxyribonuclease RuvC (187 aa).

Active-site residues include Asp7, Glu67, and Asp140. The Mg(2+) site is built by Asp7, Glu67, and Asp140.

The protein belongs to the RuvC family. As to quaternary structure, homodimer which binds Holliday junction (HJ) DNA. The HJ becomes 2-fold symmetrical on binding to RuvC with unstacked arms; it has a different conformation from HJ DNA in complex with RuvA. In the full resolvosome a probable DNA-RuvA(4)-RuvB(12)-RuvC(2) complex forms which resolves the HJ. Mg(2+) serves as cofactor.

It is found in the cytoplasm. It carries out the reaction Endonucleolytic cleavage at a junction such as a reciprocal single-stranded crossover between two homologous DNA duplexes (Holliday junction).. Functionally, the RuvA-RuvB-RuvC complex processes Holliday junction (HJ) DNA during genetic recombination and DNA repair. Endonuclease that resolves HJ intermediates. Cleaves cruciform DNA by making single-stranded nicks across the HJ at symmetrical positions within the homologous arms, yielding a 5'-phosphate and a 3'-hydroxyl group; requires a central core of homology in the junction. The consensus cleavage sequence is 5'-(A/T)TT(C/G)-3'. Cleavage occurs on the 3'-side of the TT dinucleotide at the point of strand exchange. HJ branch migration catalyzed by RuvA-RuvB allows RuvC to scan DNA until it finds its consensus sequence, where it cleaves and resolves the cruciform DNA. In Prosthecochloris aestuarii (strain DSM 271 / SK 413), this protein is Crossover junction endodeoxyribonuclease RuvC.